Consider the following 405-residue polypeptide: Acetate kinase (405 aa).

Asparagine 7 is a binding site for Mg(2+). Lysine 14 is an ATP binding site. Arginine 99 serves as a coordination point for substrate. Aspartate 156 (proton donor/acceptor) is an active-site residue. 215-219 (HLGNG) contributes to the ATP binding site. Residue glutamate 391 coordinates Mg(2+).

It belongs to the acetokinase family. In terms of assembly, homodimer. It depends on Mg(2+) as a cofactor. The cofactor is Mn(2+).

The protein localises to the cytoplasm. It carries out the reaction acetate + ATP = acetyl phosphate + ADP. It participates in metabolic intermediate biosynthesis; acetyl-CoA biosynthesis; acetyl-CoA from acetate: step 1/2. Functionally, catalyzes the formation of acetyl phosphate from acetate and ATP. Can also catalyze the reverse reaction. The chain is Acetate kinase from Trichormus variabilis (strain ATCC 29413 / PCC 7937) (Anabaena variabilis).